Reading from the N-terminus, the 254-residue chain is Aspartate/glutamate leucyltransferase (254 aa).

It belongs to the R-transferase family. Bpt subfamily.

The protein localises to the cytoplasm. The enzyme catalyses N-terminal L-glutamyl-[protein] + L-leucyl-tRNA(Leu) = N-terminal L-leucyl-L-glutamyl-[protein] + tRNA(Leu) + H(+). It carries out the reaction N-terminal L-aspartyl-[protein] + L-leucyl-tRNA(Leu) = N-terminal L-leucyl-L-aspartyl-[protein] + tRNA(Leu) + H(+). In terms of biological role, functions in the N-end rule pathway of protein degradation where it conjugates Leu from its aminoacyl-tRNA to the N-termini of proteins containing an N-terminal aspartate or glutamate. This chain is Aspartate/glutamate leucyltransferase, found in Xylella fastidiosa (strain M12).